A 421-amino-acid polypeptide reads, in one-letter code: UDP-N-acetylglucosamine 1-carboxyvinyltransferase (421 aa).

22 to 23 lines the phosphoenolpyruvate pocket; the sequence is KN. Residue arginine 94 participates in UDP-N-acetyl-alpha-D-glucosamine binding. The active-site Proton donor is the cysteine 118. Residue cysteine 118 is modified to 2-(S-cysteinyl)pyruvic acid O-phosphothioketal. UDP-N-acetyl-alpha-D-glucosamine is bound by residues 163–166, aspartate 308, and isoleucine 330; that span reads KVSV.

This sequence belongs to the EPSP synthase family. MurA subfamily.

Its subcellular location is the cytoplasm. The enzyme catalyses phosphoenolpyruvate + UDP-N-acetyl-alpha-D-glucosamine = UDP-N-acetyl-3-O-(1-carboxyvinyl)-alpha-D-glucosamine + phosphate. It participates in cell wall biogenesis; peptidoglycan biosynthesis. In terms of biological role, cell wall formation. Adds enolpyruvyl to UDP-N-acetylglucosamine. The sequence is that of UDP-N-acetylglucosamine 1-carboxyvinyltransferase from Orientia tsutsugamushi (strain Boryong) (Rickettsia tsutsugamushi).